Consider the following 120-residue polypeptide: NAD(P)H-quinone oxidoreductase subunit 3, chloroplastic (120 aa).

The next 3 membrane-spanning stretches (helical) occupy residues Phe-9–Gly-29, Met-64–Met-84, and Val-88–Leu-108.

It belongs to the complex I subunit 3 family. NDH is composed of at least 16 different subunits, 5 of which are encoded in the nucleus.

It localises to the plastid. Its subcellular location is the chloroplast thylakoid membrane. The catalysed reaction is a plastoquinone + NADH + (n+1) H(+)(in) = a plastoquinol + NAD(+) + n H(+)(out). The enzyme catalyses a plastoquinone + NADPH + (n+1) H(+)(in) = a plastoquinol + NADP(+) + n H(+)(out). Its function is as follows. NDH shuttles electrons from NAD(P)H:plastoquinone, via FMN and iron-sulfur (Fe-S) centers, to quinones in the photosynthetic chain and possibly in a chloroplast respiratory chain. The immediate electron acceptor for the enzyme in this species is believed to be plastoquinone. Couples the redox reaction to proton translocation, and thus conserves the redox energy in a proton gradient. This chain is NAD(P)H-quinone oxidoreductase subunit 3, chloroplastic, found in Nicotiana tabacum (Common tobacco).